We begin with the raw amino-acid sequence, 196 residues long: MTAEGHLLFSIACAVFAKNAELTPVLAQGDWWHIVPSAILTCLLPDIDHPKSFLGQRLKWISKPIARAFGHRGFTHSLLAVFALLATFYLKVPEGWFIPADALQGMVLGYLSHILADMLTPAGVPLLWPCRWRFRLPILVPQKGNQLERFICMALFVWSVWMPHSLPENSAVRWSSQMINTLQIQFHRLIKHQVEY.

Residues methionine 1–threonine 23 are Periplasmic-facing. The helical transmembrane segment at proline 24 to leucine 44 threads the bilayer. Residues proline 45–serine 77 lie on the Cytoplasmic side of the membrane. A helical membrane pass occupies residues leucine 78–isoleucine 98. Topologically, residues proline 99–methionine 106 are periplasmic. Residues valine 107 to leucine 127 traverse the membrane as a helical segment. At tryptophan 128 to arginine 149 the chain is on the cytoplasmic side. A helical transmembrane segment spans residues phenylalanine 150 to serine 170. Over alanine 171 to tyrosine 196 the chain is Periplasmic.

This sequence to B.subtilis YvsG.

The protein localises to the cell inner membrane. The protein is Inner membrane protein YdjM (ydjM) of Escherichia coli (strain K12).